Reading from the N-terminus, the 123-residue chain is Galanin peptides (123 aa).

The signal sequence occupies residues 1-19 (MARGSALLLASLLLAAALS). Positions 20-30 (ASAGLWSPAKE) are excised as a propeptide. The tract at residues 46–80 (HAVGNHRSFSDKNGLTSKRELRPEDDMKPGSFDRS) is disordered. Basic and acidic residues predominate over residues 62–73 (SKRELRPEDDMK). Phosphoserine occurs at positions 116 and 117.

This sequence belongs to the galanin family.

It is found in the secreted. Functionally, endocrine hormone of the central and peripheral nervous systems that binds and activates the G protein-coupled receptors GALR1, GALR2, and GALR3. This small neuropeptide may regulate diverse physiologic functions including contraction of smooth muscle of the gastrointestinal and genitourinary tract, growth hormone and insulin release and adrenal secretion. The protein is Galanin peptides (GAL) of Homo sapiens (Human).